We begin with the raw amino-acid sequence, 606 residues long: Nuclear hormone receptor E75 (606 aa).

A DNA-binding region (nuclear receptor) is located at residues 29–105; that stretch reads TVLCRVCGDK…VGMSRDAVRF (77 aa). NR C4-type zinc fingers lie at residues 32–52 and 69–93; these read CRVC…CEGC and CTKN…LKKC. An NR LBD domain is found at 138 to 392; the sequence is DDTRVTAAII…APWDDSRSSW (255 aa). 3 disordered regions span residues 382–413, 454–519, and 546–576; these read GAPW…DEAM, RRRH…EKER, and RKPT…PRSW. 2 stretches are compositionally biased toward low complexity: residues 390–406 and 501–512; these read SSWS…PSSS and LSSPSVCSSPRS. The segment covering 546-558 has biased composition (polar residues); the sequence is RKPTTSPIKSSVR.

The protein belongs to the nuclear hormone receptor family. NR1 subfamily. As to expression, expressed in the epidermis, eyestalk and the nerve cord of the pre-molt shrimp.

The protein localises to the nucleus. The protein is Nuclear hormone receptor E75 (E75) of Metapenaeus ensis (Greasyback shrimp).